Consider the following 531-residue polypeptide: Beta-hexosaminidase subunit beta (531 aa).

A signal peptide spans 1–24; that stretch reads MRHRGLGLAALLALLAAVAPRSSA. Asn50 carries an N-linked (GlcNAc...) asparagine glycan. Cys65 and Cys111 form a disulfide bridge. N-linked (GlcNAc...) asparagine glycosylation is found at Asn116, Asn164, and Asn301. Cystine bridges form between Cys283–Cys334 and Cys508–Cys525. Glu329 serves as the catalytic Proton donor.

It belongs to the glycosyl hydrolase 20 family. In terms of assembly, there are 3 forms of beta-hexosaminidase: hexosaminidase A is a heterodimer composed of one subunit alpha and one subunit beta (chain A and B); hexosaminidase B is a homodimer of two beta subunits (two chains A and B); hexosaminidase S is a homodimer of two alpha subunits. The composition of the dimer (isozyme A versus isozyme S) has a significant effect on the substrate specificity of the alpha subunit active site.

It localises to the lysosome. The protein localises to the cytoplasmic vesicle. Its subcellular location is the secretory vesicle. It is found in the cortical granule. The enzyme catalyses Hydrolysis of terminal non-reducing N-acetyl-D-hexosamine residues in N-acetyl-beta-D-hexosaminides.. It carries out the reaction N-acetyl-beta-D-galactosaminyl-(1-&gt;4)-beta-D-3-sulfogalactosyl-(1-&gt;4)-beta-D-glucosyl-(1&lt;-&gt;1')-ceramide + H2O = a beta-D-3-sulfogalactosyl-(1-&gt;4)-beta-D-glucosyl-(1&lt;-&gt;1')-ceramide + N-acetyl-beta-D-galactosamine. The catalysed reaction is a ganglioside GM2 (d18:1(4E)) + H2O = a ganglioside GM3 (d18:1(4E)) + N-acetyl-beta-D-galactosamine. It catalyses the reaction a ganglioside GM2 + H2O = a ganglioside GM3 + N-acetyl-beta-D-galactosamine. The enzyme catalyses beta-D-GalNAc-(1-&gt;4)-alpha-L-IdoA-(1-&gt;3)-beta-D-GalNAc-4-sulfate-(1-&gt;4)-alpha-L-IdoA-(1-&gt;3)-D-GalNAc-4-sulfate + H2O = alpha-L-IdoA-(1-&gt;3)-beta-D-GalNAc-4-sulfate-(1-&gt;4)-alpha-L-IdoA-(1-&gt;3)-D-GalNAc-4-sulfate + N-acetyl-D-galactosamine. It carries out the reaction N-acetyl-beta-D-6-sulfogalactosaminyl-(1-&gt;4)-alpha-L-iduronyl-(1-&gt;3)-N-acetyl-D-6-sulfogalactosamine + H2O = alpha-L-iduronyl-(1-&gt;3)-N-acetyl-D-6-sulfogalactosamine + N-acetyl-D-6-sulfogalactosamine. Its activity is regulated as follows. Addition of GM2A stimulates the hydrolysis of sulfated glycosphingolipid SM2 and the ganglioside GM2. Hydrolyzes the non-reducing end N-acetyl-D-hexosamine and/or sulfated N-acetyl-D-hexosamine of glycoconjugates, such as the oligosaccharide moieties from proteins and neutral glycolipids, or from certain mucopolysaccharides. The isozyme B does not hydrolyze each of these substrates, however hydrolyzes efficiently neutral oligosaccharide. Only the isozyme A is responsible for the degradation of GM2 gangliosides in the presence of GM2A. During fertilization is responsible, at least in part, for the zona block to polyspermy. Present in the cortical granules of non-activated oocytes, is exocytosed during the cortical reaction in response to oocyte activation and inactivates the sperm galactosyltransferase-binding site, accounting for the block in sperm binding to the zona pellucida. The sequence is that of Beta-hexosaminidase subunit beta from Felis catus (Cat).